Consider the following 134-residue polypeptide: Phosphoribosyl-AMP cyclohydrolase (134 aa).

Asp-90 provides a ligand contact to Mg(2+). Cys-91 is a Zn(2+) binding site. Positions 92 and 94 each coordinate Mg(2+). The Zn(2+) site is built by Cys-107 and Cys-114.

It belongs to the PRA-CH family. As to quaternary structure, homodimer. The cofactor is Mg(2+). Zn(2+) serves as cofactor.

The protein localises to the cytoplasm. The catalysed reaction is 1-(5-phospho-beta-D-ribosyl)-5'-AMP + H2O = 1-(5-phospho-beta-D-ribosyl)-5-[(5-phospho-beta-D-ribosylamino)methylideneamino]imidazole-4-carboxamide. The protein operates within amino-acid biosynthesis; L-histidine biosynthesis; L-histidine from 5-phospho-alpha-D-ribose 1-diphosphate: step 3/9. Its function is as follows. Catalyzes the hydrolysis of the adenine ring of phosphoribosyl-AMP. The protein is Phosphoribosyl-AMP cyclohydrolase of Arthrobacter sp. (strain FB24).